A 235-amino-acid polypeptide reads, in one-letter code: Ribosomal RNA small subunit methyltransferase G (235 aa).

S-adenosyl-L-methionine-binding positions include Gly-98, Met-103, 149-150, and Arg-164; that span reads VE.

It belongs to the methyltransferase superfamily. RNA methyltransferase RsmG family.

Its subcellular location is the cytoplasm. It carries out the reaction guanosine(527) in 16S rRNA + S-adenosyl-L-methionine = N(7)-methylguanosine(527) in 16S rRNA + S-adenosyl-L-homocysteine. Specifically methylates the N7 position of guanine in position 527 of 16S rRNA. The chain is Ribosomal RNA small subunit methyltransferase G from Cupriavidus metallidurans (strain ATCC 43123 / DSM 2839 / NBRC 102507 / CH34) (Ralstonia metallidurans).